An 89-amino-acid chain; its full sequence is Small ribosomal subunit protein bS20 (89 aa).

A disordered region spans residues methionine 1–arginine 25.

It belongs to the bacterial ribosomal protein bS20 family.

In terms of biological role, binds directly to 16S ribosomal RNA. In Paracoccus denitrificans (strain Pd 1222), this protein is Small ribosomal subunit protein bS20.